The sequence spans 201 residues: MLKQLRPALVLLTALTAITGLAYPLAMTGLAGAIFPAKAAGSLIERDGTVIGSSLIGQNFTGAGYFHGRPSATTAPDPADASKTVPAPYNAANSSGSNLGPTSAALAERVKADVEALKSENPGAPVPVDLVTTSGSGLDPDISPEAAYFQVPRVAKARNIPQDKLRDLVTARIEGRTLGVLGEPRVNVLALNLAVDDLARR.

The chain crosses the membrane as a helical span at residues 7 to 29; it reads PALVLLTALTAITGLAYPLAMTG.

Belongs to the KdpC family. In terms of assembly, the system is composed of three essential subunits: KdpA, KdpB and KdpC.

Its subcellular location is the cell inner membrane. Part of the high-affinity ATP-driven potassium transport (or Kdp) system, which catalyzes the hydrolysis of ATP coupled with the electrogenic transport of potassium into the cytoplasm. This subunit acts as a catalytic chaperone that increases the ATP-binding affinity of the ATP-hydrolyzing subunit KdpB by the formation of a transient KdpB/KdpC/ATP ternary complex. In Methylobacterium radiotolerans (strain ATCC 27329 / DSM 1819 / JCM 2831 / NBRC 15690 / NCIMB 10815 / 0-1), this protein is Potassium-transporting ATPase KdpC subunit.